Here is a 259-residue protein sequence, read N- to C-terminus: Global transcriptional regulator CodY (259 aa).

The segment at 1-155 (MDLLSRARKI…GATVVGMEIL (155 aa)) is GAF domain. Positions 203–222 (ASKIADRVGITRSVIVNALR) form a DNA-binding region, H-T-H motif. The residue at position 215 (Ser-215) is a Phosphoserine.

Belongs to the CodY family.

The protein localises to the cytoplasm. In terms of biological role, DNA-binding global transcriptional regulator which is involved in the adaptive response to starvation and acts by directly or indirectly controlling the expression of numerous genes in response to nutrient availability. During rapid exponential growth, CodY is highly active and represses genes whose products allow adaptation to nutrient depletion. The polypeptide is Global transcriptional regulator CodY (Oceanobacillus iheyensis (strain DSM 14371 / CIP 107618 / JCM 11309 / KCTC 3954 / HTE831)).